The sequence spans 260 residues: MVKFYDREFGSRLLIGSALYPSPAIMQDSIRESGAEIVTVSLRRETAGGKAGDQFWSLIRELGVTVLPNTAGCRGVRDAVTTAKLARELFATSWIKLEVIADNDTLQPDVVGLVEAAQILIKDGFEVFPYCTEDLSVALRLVDAGCRVIMPWAAPIGSARGITNRDALKLLRDRLPDITLVVDAGLGAPSHAAEAMELGYDAVLLNTAIAKAEDPVAMARGFKLAIEAGRTGFEAGLMGARDFASPSTPVIGTPFWHAVS.

The Schiff-base intermediate with DXP role is filled by K96. 1-deoxy-D-xylulose 5-phosphate is bound by residues G157, 184 to 185 (AG), and 206 to 207 (NT).

Belongs to the ThiG family. In terms of assembly, homotetramer. Forms heterodimers with either ThiH or ThiS.

It localises to the cytoplasm. The enzyme catalyses [ThiS sulfur-carrier protein]-C-terminal-Gly-aminoethanethioate + 2-iminoacetate + 1-deoxy-D-xylulose 5-phosphate = [ThiS sulfur-carrier protein]-C-terminal Gly-Gly + 2-[(2R,5Z)-2-carboxy-4-methylthiazol-5(2H)-ylidene]ethyl phosphate + 2 H2O + H(+). It functions in the pathway cofactor biosynthesis; thiamine diphosphate biosynthesis. Its function is as follows. Catalyzes the rearrangement of 1-deoxy-D-xylulose 5-phosphate (DXP) to produce the thiazole phosphate moiety of thiamine. Sulfur is provided by the thiocarboxylate moiety of the carrier protein ThiS. In vitro, sulfur can be provided by H(2)S. The chain is Thiazole synthase from Rhodopseudomonas palustris (strain TIE-1).